The primary structure comprises 185 residues: UPF0215 protein APE_0476.1 (185 aa).

It belongs to the UPF0215 family.

The protein is UPF0215 protein APE_0476.1 of Aeropyrum pernix (strain ATCC 700893 / DSM 11879 / JCM 9820 / NBRC 100138 / K1).